The primary structure comprises 188 residues: Large ribosomal subunit protein bL35m (188 aa).

This sequence belongs to the bacterial ribosomal protein bL35 family. As to quaternary structure, component of the mitochondrial large ribosomal subunit (mt-LSU). Mature mammalian 55S mitochondrial ribosomes consist of a small (28S) and a large (39S) subunit. The 28S small subunit contains a 12S ribosomal RNA (12S mt-rRNA) and 30 different proteins. The 39S large subunit contains a 16S rRNA (16S mt-rRNA), a copy of mitochondrial valine transfer RNA (mt-tRNA(Val)), which plays an integral structural role, and 52 different proteins.

The protein resides in the mitochondrion. The polypeptide is Large ribosomal subunit protein bL35m (MRPL35) (Homo sapiens (Human)).